Consider the following 275-residue polypeptide: Tryptophan synthase alpha chain (275 aa).

Residues Glu49 and Asp60 each act as proton acceptor in the active site.

It belongs to the TrpA family. Tetramer of two alpha and two beta chains.

It carries out the reaction (1S,2R)-1-C-(indol-3-yl)glycerol 3-phosphate + L-serine = D-glyceraldehyde 3-phosphate + L-tryptophan + H2O. The protein operates within amino-acid biosynthesis; L-tryptophan biosynthesis; L-tryptophan from chorismate: step 5/5. Its function is as follows. The alpha subunit is responsible for the aldol cleavage of indoleglycerol phosphate to indole and glyceraldehyde 3-phosphate. The sequence is that of Tryptophan synthase alpha chain from Psychrobacter sp. (strain PRwf-1).